The following is a 572-amino-acid chain: Frizzled-7 (572 aa).

Residues 1-32 form the signal peptide; that stretch reads MRGPGTAASHSPLGLCALVLALLGALPTDTRA. Residues 33-254 are Extracellular-facing; that stretch reads QPYHGEKGIS…EEERRFARLW (222 aa). The FZ domain maps to 44–163; that stretch reads PDHGFCQPIS…HGAGEICVGQ (120 aa). 5 disulfide bridges follow: cysteine 49-cysteine 110, cysteine 57-cysteine 103, cysteine 94-cysteine 131, cysteine 120-cysteine 160, and cysteine 124-cysteine 148. N-linked (GlcNAc...) asparagine glycosylation is present at asparagine 63. An N-linked (GlcNAc...) asparagine glycan is attached at asparagine 164. Residues 255–275 traverse the membrane as a helical segment; sequence VGVWSVLCCASTLFTVLTYLV. The Cytoplasmic portion of the chain corresponds to 276–286; sequence DMRRFSYPERP. A helical membrane pass occupies residues 287-307; that stretch reads IIFLSGCYFMVAVAHVAGFLL. Over 308 to 334 the chain is Extracellular; that stretch reads EDRAVCVERFSDDGYRTVAQGTKKEGC. The helical transmembrane segment at 335–355 threads the bilayer; the sequence is TILFMVLYFFGMASSIWWVIL. Over 356–377 the chain is Cytoplasmic; that stretch reads SLTWFLAAGMKWGHEAIEANSQ. Residues 378–398 form a helical membrane-spanning segment; that stretch reads YFHLAAWAVPAVKTITILAMG. Over 399–421 the chain is Extracellular; sequence QVDGDLLSGVCYVGLSSVDALRG. Residues 422–442 traverse the membrane as a helical segment; that stretch reads FVLAPLFVYLFIGTSFLLAGF. Topologically, residues 443-468 are cytoplasmic; that stretch reads VSLFRIRTIMKHDGTKTEKLEKLMVR. A helical transmembrane segment spans residues 469–489; that stretch reads IGVFSVLYTVPATIVLACYFY. The Extracellular portion of the chain corresponds to 490–526; it reads EQAFREHWERTWLLQTCKSYAVPCPPGHFSPMSPDFT. Residues 527 to 547 form a helical membrane-spanning segment; that stretch reads VFMIKYLMTMIVGITTGFWIW. The Cytoplasmic portion of the chain corresponds to 548–572; the sequence is SGKTLQSWRRFYHRLSHSSKGETAV. Residues 550 to 555 carry the Lys-Thr-X-X-X-Trp motif, mediates interaction with the PDZ domain of Dvl family members motif; the sequence is KTLQSW. The PDZ-binding motif lies at 570–572; it reads TAV.

Belongs to the G-protein coupled receptor Fz/Smo family. In terms of assembly, interacts with MAGI3. Interacts with DVL1. Interacts with CCDC88C/DAPLE; the interaction displaces DVL1 from FZD7, leading to inhibition of canonical Wnt signaling and triggering of non-canonical Wnt responses. Interacts with MYOC. Binds to SDCBP; this interaction is increased by inositol trisphosphate (IP3). Interacts with glypican GPC3. Post-translationally, ubiquitinated by ZNRF3, leading to its degradation by the proteasome.

Its subcellular location is the cell membrane. The protein localises to the endosome membrane. Functionally, receptor for Wnt proteins. Most frizzled receptors are coupled to the beta-catenin canonical signaling pathway, which leads to the activation of disheveled proteins, inhibition of GSK-3 kinase, nuclear accumulation of beta-catenin and activation of Wnt target genes. A second signaling pathway involving PKC and calcium fluxes has been seen for some family members, but it is not yet clear if it represents a distinct pathway or if it can be integrated in the canonical pathway, as PKC seems to be required for Wnt-mediated inactivation of GSK-3 kinase. Both pathways seem to involve interactions with G-proteins. Activation by WNT8 induces expression of beta-catenin target genes. Following ligand activation, binds to CCDC88C/DAPLE which displaces DVL1 from FZD7 and leads to inhibition of canonical Wnt signaling, activation of G-proteins by CCDC88C and triggering of non-canonical Wnt responses. May be involved in transduction and intercellular transmission of polarity information during tissue morphogenesis and/or in differentiated tissues. This Mus musculus (Mouse) protein is Frizzled-7 (Fzd7).